A 520-amino-acid chain; its full sequence is MSESGHSQPGLYGIERRRRWKEPGSSGPQNLSGPGGRERDYIAPWERERRDGSEDPSTNVMQKTPIILSKPPAERSKQPPPSTAPAAPPAPAPLEKPIVLMKPREEGKGPVAATGASTPEGTAPPPPTAPAPPKGEKEGQRPTQPVYQIQNRGMGTAAPTAMDPVVGQAKLLPPERMKHSIKLVDDQMNWCDSAIEYLLDQTDVLVVGVLGLQGTGKSMVMSLLSANTPEEDQRAYVFRAQSAEMKERGGNQTSGIDFFITQERIVFLDTQPILSPSILDHLINNDRKLPPEYNLPHTYVEMQSLQIAAFLFTVCHVVIVVQDWFTDLSLYRFLQTAEMVKPSTPSPSHESSSAAGSDEGTEYYPHLVFLQNKARREDFCPRKLRQMHLMIDQLMAHSHLRYKGTLSMLQCNIFPGLPPDFLDAEVNLFLVPFMDSEAENENPPRAGPGSSPLFSLLPGYRGHPSFQSLVSKLRSQVMSMARPQLSHTILTEKNWFHYAARIWDGVKKSSALAEYSRLLA.

Disordered regions lie at residues 1–94 (MSES…PAPL) and 107–143 (GKGP…QRPT). Serine 2 carries the N-acetylserine modification. Phosphoserine occurs at positions 2, 4, 7, 32, and 53. The segment covering 36 to 53 (GRERDYIAPWERERRDGS) has biased composition (basic and acidic residues). A compositionally biased stretch (pro residues) spans 78–94 (QPPPSTAPAAPPAPAPL). A compositionally biased stretch (low complexity) spans 112–121 (AATGASTPEG). The span at 122–133 (TAPPPPTAPAPP) shows a compositional bias: pro residues. The residue at position 451 (serine 451) is a Phosphoserine.

This sequence belongs to the SMG9 family. In terms of assembly, self-associates to form homodimers and forms heterodimers with SMG8; these assembly forms may represent SMG1C intermediate forms. Component of the SMG1C complex composed of SMG1, SMG8 and SMG9. Interacts with DHX34; the interaction is RNA-independent. Post-translationally, phosphorylated by SMG1.

Involved in nonsense-mediated decay (NMD) of mRNAs containing premature stop codons. Is recruited by release factors to stalled ribosomes together with SMG1 and SMG8 (forming the SMG1C protein kinase complex) and, in the SMG1C complex, is required for the efficient association between SMG1 and SMG8. Plays a role in brain, heart, and eye development. The polypeptide is Nonsense-mediated mRNA decay factor SMG9 (Rattus norvegicus (Rat)).